Consider the following 238-residue polypeptide: Ribosomal RNA small subunit methyltransferase G (238 aa).

S-adenosyl-L-methionine is bound by residues G106, L111, 157-158 (IE), and R170.

Belongs to the methyltransferase superfamily. RNA methyltransferase RsmG family.

Its subcellular location is the cytoplasm. It catalyses the reaction guanosine(527) in 16S rRNA + S-adenosyl-L-methionine = N(7)-methylguanosine(527) in 16S rRNA + S-adenosyl-L-homocysteine. Its function is as follows. Specifically methylates the N7 position of guanine in position 527 of 16S rRNA. The sequence is that of Ribosomal RNA small subunit methyltransferase G from Psychrobacter cryohalolentis (strain ATCC BAA-1226 / DSM 17306 / VKM B-2378 / K5).